A 261-amino-acid chain; its full sequence is Protein OSB1, mitochondrial (261 aa).

A mitochondrion-targeting transit peptide spans 1-28; that stretch reads MNTFFKLGSLIQRTASQISSSFPKSRFF. One can recognise an SSB domain in the interval 55 to 155; that stretch reads VNSVSLMGFV…VKVAEVNYVA (101 aa). A PDF region region spans residues 189–238; it reads WQVFFSNPYDWWDNRRNKKNPKQPDFKHKDTGEALWLCSDLPDWITRRLE.

As to expression, expressed in root elongation zone and in gametophytic cells.

The protein localises to the mitochondrion. In terms of biological role, regulates mitochondrial DNA recombination. Represses homologous recombination, preventing mitochondrial genome instability and unbalanced transmission of alternative mtDNA configurations. Binds preferentially single-stranded DNA. Does not bind to RNA. This chain is Protein OSB1, mitochondrial (OSB1), found in Arabidopsis thaliana (Mouse-ear cress).